The primary structure comprises 523 residues: Metalloendopeptidase OMA1, mitochondrial (523 aa).

The N-terminal 45 residues, 1–45, are a transit peptide targeting the mitochondrion; the sequence is MSFIYGLQSAARNCFFFRFNLLTNWRKCNTQAVTSRDFHQVKINH. Positions 46-143 are excised as a propeptide; sequence IVNKSLGLGV…RSFHTSPRCQ (98 aa). The Mitochondrial matrix segment spans residues 144-195; that stretch reads AAPAPLLLMILKPAQKLLAIIVGRGIRKWWQALPPNKKELFKESLRKNKWKL. The segment at 148–167 is cardiolipin-binding; it reads PLLLMILKPAQKLLAIIVGR. The segment at 165–195 is stress-sensor region; it reads VGRGIRKWWQALPPNKKELFKESLRKNKWKL. Residues 196–216 form a helical membrane-spanning segment; it reads FLGLSSFGLLFVVFYFTHLEV. Histidine 327 is a binding site for Zn(2+). Glutamate 328 is a catalytic residue. Histidine 331 and glutamate 392 together coordinate Zn(2+). Residues cysteine 407 and cysteine 465 are joined by a disulfide bond.

It belongs to the peptidase M48 family. As to quaternary structure, homooligomer. It depends on Zn(2+) as a cofactor. In terms of processing, autocatalytically cleaved in response to mitochondrial depolarization both at the N-terminus and C-terminus to generate the short active form (S-OMA1). Autocatalytic processing at the C-terminus takes place at residues 447-456. The S-OMA1 form is unstable. OMA1 pre-processing by AFG3L2 may participate in maturation before OMA1 autocatalytic cleavage. Degraded by YMEL1 in response to membrane depolarization. Protein turnover is regulated by prohibitin (PHB and PHB2), which promotes degradation of OMA1 in a cardiolipin-binding manner. May form a redox-dependent disulfide bond. Exists in a semi-oxidized state and is activated by prolonged hypoxia.

It localises to the mitochondrion inner membrane. With respect to regulation, protease activity is activated upon autocatalytic cleavage in response to mitochondrial depolarization. Metalloprotease that is part of the quality control system in the inner membrane of mitochondria. Activated in response to various mitochondrial stress, leading to the proteolytic cleavage of target proteins, such as OPA1, UQCC3 and DELE1. Involved in the fusion of the mitochondrial inner membranes by mediating cleavage of OPA1 at S1 position, generating the soluble OPA1 (S-OPA1), which cooperates with the membrane form (L-OPA1) to coordinate the fusion of mitochondrial inner membranes. Following stress conditions that induce loss of mitochondrial membrane potential, mediates cleavage of OPA1, leading to excess production of soluble OPA1 (S-OPA1) and negative regulation of mitochondrial fusion. Involved in mitochondrial safeguard in response to transient mitochondrial membrane depolarization (flickering) by catalyzing cleavage of OPA1, leading to excess production of S-OPA1, preventing mitochondrial hyperfusion. Also acts as a regulator of apoptosis: upon BAK and BAX aggregation, mediates cleavage of OPA1, leading to the remodeling of mitochondrial cristae and allowing the release of cytochrome c from mitochondrial cristae. In depolarized mitochondria, may also act as a backup protease for PINK1 by mediating PINK1 cleavage and promoting its subsequent degradation by the proteasome. May also cleave UQCC3 in response to mitochondrial depolarization. Also acts as an activator of the integrated stress response (ISR): in response to mitochondrial stress, mediates cleavage of DELE1 to generate the processed form of DELE1 (S-DELE1), which translocates to the cytosol and activates EIF2AK1/HRI to trigger the ISR. Its role in mitochondrial quality control is essential for regulating lipid metabolism as well as to maintain body temperature and energy expenditure under cold-stress conditions. Binds cardiolipin, possibly regulating its protein turnover. Required for the stability of the respiratory supercomplexes. The sequence is that of Metalloendopeptidase OMA1, mitochondrial from Bos taurus (Bovine).